The chain runs to 98 residues: Large ribosomal subunit protein eL21 (98 aa).

The segment covering Met-1–Gly-24 has biased composition (basic residues). The disordered stretch occupies residues Met-1–Pro-27.

The protein belongs to the eukaryotic ribosomal protein eL21 family.

The protein is Large ribosomal subunit protein eL21 of Thermococcus gammatolerans (strain DSM 15229 / JCM 11827 / EJ3).